The following is a 92-amino-acid chain: Small ribosomal subunit protein uS19 (92 aa).

Belongs to the universal ribosomal protein uS19 family.

Its function is as follows. Protein S19 forms a complex with S13 that binds strongly to the 16S ribosomal RNA. In Rickettsia prowazekii (strain Madrid E), this protein is Small ribosomal subunit protein uS19 (rpsS).